The primary structure comprises 188 residues: Elongation factor P (188 aa).

This sequence belongs to the elongation factor P family.

The protein resides in the cytoplasm. It participates in protein biosynthesis; polypeptide chain elongation. Functionally, involved in peptide bond synthesis. Stimulates efficient translation and peptide-bond synthesis on native or reconstituted 70S ribosomes in vitro. Probably functions indirectly by altering the affinity of the ribosome for aminoacyl-tRNA, thus increasing their reactivity as acceptors for peptidyl transferase. The chain is Elongation factor P from Caulobacter vibrioides (strain ATCC 19089 / CIP 103742 / CB 15) (Caulobacter crescentus).